The chain runs to 127 residues: Protein ApaG (127 aa).

Residues 3-127 (DDPRYRVEVE…FVLSVPRTLH (125 aa)) enclose the ApaG domain.

In Xanthomonas euvesicatoria pv. vesicatoria (strain 85-10) (Xanthomonas campestris pv. vesicatoria), this protein is Protein ApaG.